A 678-amino-acid polypeptide reads, in one-letter code: RAS guanyl-releasing protein 4 (678 aa).

Basic residues-rich tracts occupy residues 1–10 and 20–32; these read MNRKDIKRKS and GHGRPRQARRHKT. Disordered stretches follow at residues 1–33 and 165–185; these read MNRKDIKRKSHQECSGKAGGHGRPRQARRHKTC and GDASNLLSPGGPGPPPLMSSP. Residues 49 to 175 form the N-terminal Ras-GEF domain; that stretch reads GVLSESSCSV…DASNLLSPGG (127 aa). One can recognise a Ras-GEF domain in the interval 201-432; sequence ETEELAQHLT…YELSYAREPR (232 aa). The 36-residue stretch at 466-501 folds into the EF-hand domain; it reads HVEQLVESVFKNYDPEGHGSISLEDFEKLSANFPFA. A Phorbol-ester/DAG-type zinc finger spans residues 540–595; the sequence is LHAFQEVTFRKPTFCHSCNGFVSTGPLWGVTKRGYRCQDCGLCCHRHCRDQVRVEC. Disordered stretches follow at residues 598–620 and 651–678; these read RPETKGDPGPPGAPGPATPLPPT and SSHSSWEPEMVPCPAPVLPSKASSKSSV. Residues 605–619 are compositionally biased toward pro residues; sequence PGPPGAPGPATPLPP.

This sequence belongs to the RASGRP family. Expressed by mast cells and their progenitors (at protein level).

It is found in the cytoplasm. It localises to the cell membrane. In terms of biological role, functions as a cation- and diacylglycerol (DAG)-regulated nucleotide exchange factor activating Ras through the exchange of bound GDP for GTP. In neutrophils, participates in a phospholipase C-activating N-formyl peptide-activated GPCR (G protein-coupled receptor) signaling pathway by promoting Ras-mediated activation of PIK3CG/PI3Kgamma to promote neutrophil functional responses. In CD117(+) dendritic cells and mast cells, participates in an lipopolysaccharide (LPS)-activated signaling pathway that stimulates the production of interferon-gamma and other pro-inflammatory cytokines by natural killer (NK) cells. May function in mast cell differentiation. Does not appear to be required for the development of B-cells, DC-cells, T-cells, or NK-cells. This chain is RAS guanyl-releasing protein 4 (Rasgrp4), found in Rattus norvegicus (Rat).